The sequence spans 334 residues: Dihydroorotate dehydrogenase (quinone) (334 aa).

Residues 59 to 63 (AGLDK) and T83 contribute to the FMN site. Residue K63 coordinates substrate. 108 to 112 (NRMGF) serves as a coordination point for substrate. Positions 136 and 169 each coordinate FMN. N169 serves as a coordination point for substrate. Residue S172 is the Nucleophile of the active site. A substrate-binding site is contributed by N174. Residues K214 and T242 each coordinate FMN. Residue 243 to 244 (NT) coordinates substrate. Residues G265, G294, and 315 to 316 (YS) each bind FMN.

The protein belongs to the dihydroorotate dehydrogenase family. Type 2 subfamily. In terms of assembly, monomer. FMN serves as cofactor.

It is found in the cell membrane. The enzyme catalyses (S)-dihydroorotate + a quinone = orotate + a quinol. It functions in the pathway pyrimidine metabolism; UMP biosynthesis via de novo pathway; orotate from (S)-dihydroorotate (quinone route): step 1/1. Its function is as follows. Catalyzes the conversion of dihydroorotate to orotate with quinone as electron acceptor. The chain is Dihydroorotate dehydrogenase (quinone) from Acinetobacter baylyi (strain ATCC 33305 / BD413 / ADP1).